The sequence spans 65 residues: Large ribosomal subunit protein bL33m (65 aa).

The protein belongs to the bacterial ribosomal protein bL33 family. In terms of assembly, component of the mitochondrial ribosome large subunit (39S) which comprises a 16S rRNA and about 50 distinct proteins.

It is found in the mitochondrion. The polypeptide is Large ribosomal subunit protein bL33m (mRpL33) (Anopheles gambiae (African malaria mosquito)).